The following is a 173-amino-acid chain: Large ribosomal subunit protein uL22c (173 aa).

The protein belongs to the universal ribosomal protein uL22 family. As to quaternary structure, part of the 50S ribosomal subunit.

The protein localises to the plastid. It localises to the chloroplast. Its function is as follows. This protein binds specifically to 23S rRNA. Functionally, the globular domain of the protein is located near the polypeptide exit tunnel on the outside of the subunit, while an extended beta-hairpin is found that lines the wall of the exit tunnel in the center of the 70S ribosome. In Drimys granadensis, this protein is Large ribosomal subunit protein uL22c (rpl22).